Reading from the N-terminus, the 675-residue chain is DNA ligase (675 aa).

NAD(+) contacts are provided by residues 32 to 36 (DAEYD), 81 to 82 (SL), and Glu-113. Catalysis depends on Lys-115, which acts as the N6-AMP-lysine intermediate. Arg-136, Glu-173, Lys-291, and Lys-315 together coordinate NAD(+). The Zn(2+) site is built by Cys-409, Cys-412, Cys-427, and Cys-433. The 81-residue stretch at 595–675 (SEKTYFFNKK…ELNSLIRIKE (81 aa)) folds into the BRCT domain.

It belongs to the NAD-dependent DNA ligase family. LigA subfamily. The cofactor is Mg(2+). Mn(2+) serves as cofactor.

The enzyme catalyses NAD(+) + (deoxyribonucleotide)n-3'-hydroxyl + 5'-phospho-(deoxyribonucleotide)m = (deoxyribonucleotide)n+m + AMP + beta-nicotinamide D-nucleotide.. Its function is as follows. DNA ligase that catalyzes the formation of phosphodiester linkages between 5'-phosphoryl and 3'-hydroxyl groups in double-stranded DNA using NAD as a coenzyme and as the energy source for the reaction. It is essential for DNA replication and repair of damaged DNA. This Buchnera aphidicola subsp. Acyrthosiphon pisum (strain 5A) protein is DNA ligase.